A 990-amino-acid polypeptide reads, in one-letter code: Kinesin-related protein 5 (990 aa).

Residues 6–330 enclose the Kinesin motor domain; it reads NIRVMCRFRP…LKFGARAKSI (325 aa). Residue 83-90 coordinates ATP; that stretch reads GQTGSGKT. Disordered regions lie at residues 401–485 and 732–788; these read QSNS…SSID and FSSS…QDQQ. Gly residues predominate over residues 406 to 418; it reads SGGGGSGSSGGSS. Low complexity-rich tracts occupy residues 466-485 and 733-781; these read TSSI…SSID and SSSN…PSSN. The stretch at 513-948 forms a coiled coil; the sequence is IEMEKMKEDT…DQLISTQRLI (436 aa).

The protein belongs to the TRAFAC class myosin-kinesin ATPase superfamily. Kinesin family. Kinesin subfamily. In terms of assembly, interacts with actin.

The protein resides in the cytoplasm. It is found in the cytoskeleton. In terms of biological role, microtubule-associated force-producing protein that plays a role in organelle transport. Its motor activity is directed toward the microtubule's plus end. May connect microtubules to actin filaments. Associates with actin-based structures in cells and is likely involved in the organization of actin cytoskeletons in such structures. In Dictyostelium discoideum (Social amoeba), this protein is Kinesin-related protein 5 (kif5).